A 488-amino-acid chain; its full sequence is MTAEQLPPELQRVHMVGIGGAGMSGIARILLDRGGLVSGSDAKESRGVHALRARGALIRIGHDASALDLLPGGVTSVITTHAAIPKTNPELVEASRRGIPVMLRPLVLAKLMDGRTTVMVTGTHGKTTTTSMVIVALQHCGRDPSFAVGGELGEAGTNAHHGSGDYFVAEADESDGSLLEYTPHVAVVTNIEADHLDFYGSTEAYVGVFDAFVERLAPGGALVVCADDPGSAALAERSAELGIRVLRYGSAGHAEAALAATLVSWEQRGTGAVAQIQLAGEADPRSMRLSVPGRHMALNALGALLAAIEVGAPVGEVLDGLAGFEGVRRRFELVGTAESVRVFDDYAHHPTEVRATLEAVRSVVRQSGSGRLLVVFQPHLYSRTKAFAAEFGSALDAADEVFVLDVYAAREQPLTGISGASVAEHVTVPVRYLRDFSAVAEVVAAAAGPGDVVVTMGAGDVTLLGPEIVAALRMRADRSEPGRPGVLQ.

122–128 lines the ATP pocket; it reads GTHGKTT.

The protein belongs to the MurCDEF family.

Its subcellular location is the cytoplasm. The enzyme catalyses UDP-N-acetyl-alpha-D-muramate + L-alanine + ATP = UDP-N-acetyl-alpha-D-muramoyl-L-alanine + ADP + phosphate + H(+). Its pathway is cell wall biogenesis; peptidoglycan biosynthesis. Its function is as follows. Cell wall formation. The sequence is that of UDP-N-acetylmuramate--L-alanine ligase from Mycobacterium marinum (strain ATCC BAA-535 / M).